The following is a 539-amino-acid chain: GMP synthase [glutamine-hydrolyzing] (539 aa).

Residues 4-202 enclose the Glutamine amidotransferase type-1 domain; sequence KILILDFGSQ…VLQIAGAKPD (199 aa). The Nucleophile role is filled by C81. Catalysis depends on residues H176 and E178. In terms of domain architecture, GMPS ATP-PPase spans 203 to 395; that stretch reads WIMSNHIEEA…LGLPPEMVYR (193 aa). Residue 230–236 participates in ATP binding; sequence SGGVDSS.

In terms of assembly, homodimer.

It carries out the reaction XMP + L-glutamine + ATP + H2O = GMP + L-glutamate + AMP + diphosphate + 2 H(+). Its pathway is purine metabolism; GMP biosynthesis; GMP from XMP (L-Gln route): step 1/1. Its function is as follows. Catalyzes the synthesis of GMP from XMP. The chain is GMP synthase [glutamine-hydrolyzing] from Burkholderia ambifaria (strain ATCC BAA-244 / DSM 16087 / CCUG 44356 / LMG 19182 / AMMD) (Burkholderia cepacia (strain AMMD)).